The chain runs to 614 residues: DNA mismatch repair protein MutL (614 aa).

Belongs to the DNA mismatch repair MutL/HexB family.

Its function is as follows. This protein is involved in the repair of mismatches in DNA. It is required for dam-dependent methyl-directed DNA mismatch repair. May act as a 'molecular matchmaker', a protein that promotes the formation of a stable complex between two or more DNA-binding proteins in an ATP-dependent manner without itself being part of a final effector complex. This is DNA mismatch repair protein MutL from Leptospira biflexa serovar Patoc (strain Patoc 1 / ATCC 23582 / Paris).